A 368-amino-acid chain; its full sequence is DNA replication and repair protein RecF (368 aa).

30–37 is an ATP binding site; sequence GDNGAGKT.

Belongs to the RecF family.

It is found in the cytoplasm. In terms of biological role, the RecF protein is involved in DNA metabolism; it is required for DNA replication and normal SOS inducibility. RecF binds preferentially to single-stranded, linear DNA. It also seems to bind ATP. The chain is DNA replication and repair protein RecF from Xanthomonas campestris pv. campestris (strain 8004).